Reading from the N-terminus, the 73-residue chain is MINKKSNASTPLEKAINAVGGSQKVLAEKVGVTPQAINMLKKRGGSLPVTKMRKYEEVTGLPREVLYPGIFAA.

Residues 12-66 (LEKAINAVGGSQKVLAEKVGVTPQAINMLKKRGGSLPVTKMRKYEEVTGLPREVL) form the HTH cro/C1-type domain. Residues 23 to 42 (QKVLAEKVGVTPQAINMLKK) constitute a DNA-binding region (H-T-H motif).

This is Gene 30 protein (30) from Escherichia coli (Bacteriophage phi-80).